The primary structure comprises 76 residues: MDAFTAMFPELFPIEEGLEDALVGSLSDTSAASASATHTSPASTDTFDDADILAILADAEHWRGGNTTAHGWCVVA.

Cys-73 is subject to Cysteine methyl ester. Cys-73 is lipidated: S-farnesyl cysteine. A propeptide spans 74 to 76 (VVA) (removed in mature form).

The protein localises to the cell membrane. Functionally, activates B-regulated development. This Schizophyllum commune (Split gill fungus) protein is Mating-type pheromone BBP1(1) (BBP1(1)).